The following is a 359-amino-acid chain: MKTERVNVNVNNQPYPIYIGENLLQDKSLLQRHVKGRQVMIVSNETIAAFYLDPLKAIYQDFQCDTFILPDGEQYKTLEYWERILHKLACNHHRDTTLIALGGGVVGDITGFAAACYQRGVDFIQVPTTLLAQVDASIGGKTAVNHPVGKNLIGAFHQPKAVIIDLNTLNTLPEREFKAGMAEIVKAALIKDEKFFTDLENKMSDLLQRNFIFLQAVIKRAAEIKRDIVNADEKERSGERALLNLGHTFAHAIERLLGYGQWLHGEAVSAGLVLAAQLSHRKNLLDFESLQRICRLLTQISLPIHFPKSINADELLSAMYMDKKVANERLHLILLEDLGHAVVSDQVDDRELKSFLENG.

NAD(+) contacts are provided by residues 71 to 76 (DGEQYK), 104 to 108 (GVVGD), 128 to 129 (TT), K141, K150, and 168 to 171 (TLNT). E183, H247, and H264 together coordinate Zn(2+).

This sequence belongs to the sugar phosphate cyclases superfamily. Dehydroquinate synthase family. Co(2+) is required as a cofactor. It depends on Zn(2+) as a cofactor. Requires NAD(+) as cofactor.

The protein resides in the cytoplasm. The enzyme catalyses 7-phospho-2-dehydro-3-deoxy-D-arabino-heptonate = 3-dehydroquinate + phosphate. The protein operates within metabolic intermediate biosynthesis; chorismate biosynthesis; chorismate from D-erythrose 4-phosphate and phosphoenolpyruvate: step 2/7. Catalyzes the conversion of 3-deoxy-D-arabino-heptulosonate 7-phosphate (DAHP) to dehydroquinate (DHQ). The protein is 3-dehydroquinate synthase of Coxiella burnetii (strain Dugway 5J108-111).